Consider the following 157-residue polypeptide: MLELDLQRATDAAAPDDAAFRRWCELALRQRTADSEMTIRLVDEAEGRELNHTYRHKDYATNVLSFPADVPDDLLDIPLLGDLVICVPVVEREAREQGKALEAHWAHLVIHGCLHLLGYDHIEDDEAEEMEALERELLAELGHPDPYADDETDSITH.

Zn(2+)-binding residues include His-111, His-115, and His-121.

This sequence belongs to the endoribonuclease YbeY family. Zn(2+) is required as a cofactor.

Its subcellular location is the cytoplasm. In terms of biological role, single strand-specific metallo-endoribonuclease involved in late-stage 70S ribosome quality control and in maturation of the 3' terminus of the 16S rRNA. The polypeptide is Endoribonuclease YbeY (Pseudomonas entomophila (strain L48)).